A 407-amino-acid polypeptide reads, in one-letter code: Biflaviolin synthase CYP158A1 (407 aa).

The segment covering 1-11 (MTQETTTLTGQ) has biased composition (polar residues). A disordered region spans residues 1–20 (MTQETTTLTGQSPPPVRDWP). Flaviolin-binding positions include arginine 92, tyrosine 199, and 290–291 (HR). Cysteine 356 contacts heme.

This sequence belongs to the cytochrome P450 family. It depends on heme as a cofactor.

It carries out the reaction 2 flaviolin + 2 reduced [2Fe-2S]-[ferredoxin] + O2 + H(+) = 3,3'-biflaviolin + 2 oxidized [2Fe-2S]-[ferredoxin] + 2 H2O. It catalyses the reaction 2 flaviolin + 2 reduced [2Fe-2S]-[ferredoxin] + O2 + H(+) = 3,8'-biflaviolin + 2 oxidized [2Fe-2S]-[ferredoxin] + 2 H2O. Its pathway is pigment biosynthesis. Its function is as follows. Catalyzes oxidative C-C coupling reaction to polymerize flaviolin and form highly conjugated pigments which protect the soil bacterium from deleterious effects of UV irradiation (two isomers of biflaviolin and one triflaviolin). The sequence is that of Biflaviolin synthase CYP158A1 from Streptomyces coelicolor (strain ATCC BAA-471 / A3(2) / M145).